A 462-amino-acid chain; its full sequence is SET domain-containing protein SmydA-8, isoform A (462 aa).

The SET domain occupies 55–287 (PNWTISSSTV…KGGEITTTYT (233 aa)).

This sequence belongs to the class V-like SAM-binding methyltransferase superfamily.

The protein is SET domain-containing protein SmydA-8, isoform A of Drosophila melanogaster (Fruit fly).